A 101-amino-acid chain; its full sequence is Urease subunit beta (101 aa).

Belongs to the urease beta subunit family. Heterotrimer of UreA (gamma), UreB (beta) and UreC (alpha) subunits. Three heterotrimers associate to form the active enzyme.

It localises to the cytoplasm. It carries out the reaction urea + 2 H2O + H(+) = hydrogencarbonate + 2 NH4(+). It functions in the pathway nitrogen metabolism; urea degradation; CO(2) and NH(3) from urea (urease route): step 1/1. The protein is Urease subunit beta of Actinobacillus pleuropneumoniae serotype 7 (strain AP76).